The following is a 334-amino-acid chain: Mitochondrial ribosome-associated GTPase 1 (334 aa).

Residues 36 to 209 (AKGLKKMQSS…LLDTPGVLAP (174 aa)) enclose the CP-type G domain. Residues 83 to 86 (NKMD), 153 to 158 (NVGKSS), and Gly-205 contribute to the GTP site.

The protein belongs to the TRAFAC class YlqF/YawG GTPase family. MTG1 subfamily. Associates with the mitochondrial ribosome large subunit; the association occurs in a GTP-dependent manner.

Its subcellular location is the mitochondrion inner membrane. Plays a role in the regulation of the mitochondrial ribosome assembly and of translational activity. Displays mitochondrial GTPase activity. The chain is Mitochondrial ribosome-associated GTPase 1 (MTG1) from Homo sapiens (Human).